The primary structure comprises 438 residues: Adenylosuccinate synthetase (438 aa).

Residues 13 to 19 and 41 to 43 each bind GTP; these read GDEGKGK and GHT. The active-site Proton acceptor is Asp14. Positions 14 and 41 each coordinate Mg(2+). IMP contacts are provided by residues 14–17, 39–42, Thr130, Arg144, Gln225, Thr240, and Arg310; these read DEGK and NAGH. The active-site Proton donor is the His42. 306–312 contacts substrate; sequence ATTGRLR. GTP is bound by residues Arg312, 338-340, and 421-423; these read KLD and STG.

The protein belongs to the adenylosuccinate synthetase family. In terms of assembly, homodimer. Requires Mg(2+) as cofactor.

It localises to the cytoplasm. The enzyme catalyses IMP + L-aspartate + GTP = N(6)-(1,2-dicarboxyethyl)-AMP + GDP + phosphate + 2 H(+). It participates in purine metabolism; AMP biosynthesis via de novo pathway; AMP from IMP: step 1/2. In terms of biological role, plays an important role in the de novo pathway of purine nucleotide biosynthesis. Catalyzes the first committed step in the biosynthesis of AMP from IMP. This is Adenylosuccinate synthetase from Vibrio vulnificus (strain YJ016).